We begin with the raw amino-acid sequence, 668 residues long: Cyclin-dependent kinase 11.2 (668 aa).

A disordered region spans residues methionine 1–glutamate 265. 3 stretches are compositionally biased toward basic and acidic residues: residues lysine 35–aspartate 73, tyrosine 85–arginine 127, and leucine 140–methionine 163. Over residues glutamate 164 to valine 181 the composition is skewed to acidic residues. Composition is skewed to basic and acidic residues over residues asparagine 197–serine 212 and proline 245–glutamate 265. The Protein kinase domain maps to tyrosine 304–phenylalanine 600. Residues isoleucine 310–valine 318 and lysine 333 contribute to the ATP site. The active-site Proton acceptor is aspartate 432.

Belongs to the protein kinase superfamily. CMGC Ser/Thr protein kinase family. CDC2/CDKX subfamily. As to expression, expressed in somatic cells and at varying levels throughout the germline (at protein level). Highly expressed in the germ line of hermaphrodites (at protein level).

It is found in the nucleus. The protein resides in the cytoplasm. It carries out the reaction L-seryl-[protein] + ATP = O-phospho-L-seryl-[protein] + ADP + H(+). The enzyme catalyses L-threonyl-[protein] + ATP = O-phospho-L-threonyl-[protein] + ADP + H(+). In terms of biological role, probable cyclin-dependent kinase whose activity is most likely regulated by the cyclin cyl-1/Cylin-L. Acts partially redundantly with cdk-11.1 to ensure embryonic viability. In contrast to cdk-11.1, not essential for male and female fertility. The polypeptide is Cyclin-dependent kinase 11.2 (Caenorhabditis elegans).